The chain runs to 539 residues: Eukaryotic translation initiation factor 3 subunit L (539 aa).

The region spanning 306–514 (TFSDILLYIQ…IHIADTKVSH (209 aa)) is the PCI domain.

Belongs to the eIF-3 subunit L family. Component of the eukaryotic translation initiation factor 3 (eIF-3) complex. The eIF-3 complex interacts with pix.

It is found in the cytoplasm. Component of the eukaryotic translation initiation factor 3 (eIF-3) complex, which is involved in protein synthesis of a specialized repertoire of mRNAs and, together with other initiation factors, stimulates binding of mRNA and methionyl-tRNAi to the 40S ribosome. The eIF-3 complex specifically targets and initiates translation of a subset of mRNAs involved in cell proliferation. The polypeptide is Eukaryotic translation initiation factor 3 subunit L (Drosophila sechellia (Fruit fly)).